A 421-amino-acid chain; its full sequence is Serine--tRNA ligase (421 aa).

229–231 (TAE) provides a ligand contact to L-serine. ATP is bound at residue 260–262 (RAE). Glu-283 is a binding site for L-serine. 347 to 350 (EISS) is an ATP binding site. Residue Ser-383 coordinates L-serine.

Belongs to the class-II aminoacyl-tRNA synthetase family. Type-1 seryl-tRNA synthetase subfamily. In terms of assembly, homodimer. The tRNA molecule binds across the dimer.

The protein localises to the cytoplasm. It catalyses the reaction tRNA(Ser) + L-serine + ATP = L-seryl-tRNA(Ser) + AMP + diphosphate + H(+). It carries out the reaction tRNA(Sec) + L-serine + ATP = L-seryl-tRNA(Sec) + AMP + diphosphate + H(+). The protein operates within aminoacyl-tRNA biosynthesis; selenocysteinyl-tRNA(Sec) biosynthesis; L-seryl-tRNA(Sec) from L-serine and tRNA(Sec): step 1/1. In terms of biological role, catalyzes the attachment of serine to tRNA(Ser). Is also able to aminoacylate tRNA(Sec) with serine, to form the misacylated tRNA L-seryl-tRNA(Sec), which will be further converted into selenocysteinyl-tRNA(Sec). This chain is Serine--tRNA ligase, found in Desulfitobacterium hafniense (strain DSM 10664 / DCB-2).